We begin with the raw amino-acid sequence, 363 residues long: Fructose-bisphosphate aldolase A (363 aa).

Residue arginine 43 coordinates beta-D-fructose 1,6-bisphosphate. Catalysis depends on glutamate 188, which acts as the Proton acceptor. The Schiff-base intermediate with dihydroxyacetone-P role is filled by lysine 230. Beta-D-fructose 1,6-bisphosphate-binding positions include 272–274, serine 301, and arginine 304; that span reads SGG.

The protein belongs to the class I fructose-bisphosphate aldolase family. In terms of assembly, tetramer.

It catalyses the reaction beta-D-fructose 1,6-bisphosphate = D-glyceraldehyde 3-phosphate + dihydroxyacetone phosphate. It functions in the pathway carbohydrate degradation; glycolysis; D-glyceraldehyde 3-phosphate and glycerone phosphate from D-glucose: step 4/4. In terms of biological role, plays a key role in glycolysis and gluconeogenesis. The polypeptide is Fructose-bisphosphate aldolase A (Salmo salar (Atlantic salmon)).